Here is a 659-residue protein sequence, read N- to C-terminus: Crossover junction endonuclease MUS81 (659 aa).

The Helix-hairpin-helix motif 1 signature appears at 59–78; sequence KDLSQIKGFGKWMVKLMKGY. Residues 404–503 form the ERCC4 domain; sequence ILILDDREKF…KKLIYILEGD (100 aa). A Helix-hairpin-helix motif 2 motif is present at residues 585–622; sequence TISDVFAIQLMQVPQVTEEIAIAVLDMYPTLLSLASAY.

The protein belongs to the XPF family. Forms a heterodimer with EME1A or EME1B. Mg(2+) serves as cofactor. Requires Ca(2+) as cofactor. In terms of tissue distribution, ubiquitous but preferentially expressed in young flowers buds, notably in anthers.

Its subcellular location is the nucleus. The protein localises to the nucleolus. Interacts with EME1 to form a DNA structure-specific endonuclease with substrate preference for branched DNA structures with a 5'-end at the branch nick. Typical substrates include 3'-flap structures, D-loops, replication forks, nicked Holliday junctions and also intact Holliday junctions with a reduced efficiency. May be required in mitosis for the processing of stalled or collapsed replication fork intermediates. Plays a role in DNA repair and in genotoxic stress-induced homologous recombination (HR) in somatic cells. Mediates a subset of meiotic recombination events that are insensitive to crossover interference. Together with SEND1, essential for the resolution of toxic replication structures to ensure genome stability, and to maintain telomere integrity and replication. This Arabidopsis thaliana (Mouse-ear cress) protein is Crossover junction endonuclease MUS81.